The following is a 493-amino-acid chain: Lysine--tRNA ligase (493 aa).

Mg(2+) contacts are provided by Glu404 and Glu411.

Belongs to the class-II aminoacyl-tRNA synthetase family. Homodimer. The cofactor is Mg(2+).

The protein resides in the cytoplasm. The catalysed reaction is tRNA(Lys) + L-lysine + ATP = L-lysyl-tRNA(Lys) + AMP + diphosphate. This is Lysine--tRNA ligase from Oceanobacillus iheyensis (strain DSM 14371 / CIP 107618 / JCM 11309 / KCTC 3954 / HTE831).